Here is a 780-residue protein sequence, read N- to C-terminus: Cullin-5 (780 aa).

Residue S34 is modified to Phosphoserine. Phosphothreonine is present on T210. The Cullin neddylation domain maps to 711-772 (RILRTQEAII…HKYIRRDESD (62 aa)). Residue K724 forms a Glycyl lysine isopeptide (Lys-Gly) (interchain with G-Cter in NEDD8) linkage.

Belongs to the cullin family. As to quaternary structure, component of multiple cullin-5-RING E3 ubiquitin-protein ligase complexes (ECS complexes, also named CRL5 complexes) formed of CUL5, Elongin BC (ELOB and ELOC), RNF7/RBX2 and a variable SOCS box domain-containing protein as substrate-specific recognition component. CUL5-containing ECS complexes specifically contain RNF7/RBX2, and not RBX1, as catalytic subunit. Component of the ECS(ASB2) complex with the substrate recognition component ASB2. Component of the ECS(ASB6) complex with the substrate recognition component ASB6. Component of the ECS(ASB7) complex with the substrate recognition component ASB7. Component of the ECS(ASB9) complex with the substrate recognition component ASB9. Component of the ECS(ASB11) complex with the substrate recognition component ASB11. Component of the ECS(ASB12) complex with the substrate recognition component ASB12. Component of the ECS(LRRC41) complex with the substrate recognition component LRRC41. Component of the ECS(SOCS1) complex with the substrate recognition component SOCS1. Component of the ECS(SOCS2) complex with the substrate recognition component SOCS2. Component of the ECS(WSB1) complex with the substrate recognition subunit WSB1. Component of the ECS(SOCS3) complex with the substrate recognition component SOCS3. Component of the ECS(SOCS7) complex with the substrate recognition component SOCS7. Component of the ECS(SPSB1) complex with the substrate recognition component SPSB1. Component of the ECS(SPSB3) complex with the substrate recognition component SPSB3. Component of the ECS(SPSB2) complex with the substrate recognition component SPSB2. Component of the ECS(SPSB4) complex with the substrate recognition component SPSB4. Component of the ECS(RAB40) complex with the substrate recognition subunit RAB40A, RAB40B or RAB40C. Component of the ECS(KLHDC1) complex with the substrate recognition component KLHDC1. Component of the ECS(PCMTD1) complex with the substrate recognition subunit PCMTD1. May also form complexes containing RBX1 and ELOA or VHL; additional evidence is however required to confirm this result in vivo. Interacts (when neddylated) with ARIH2; leading to activate the E3 ligase activity of ARIH2. Interacts with ERCC6; the interaction is induced by DNA damaging agents or inhibitors of RNA polymerase II elongation. Interacts with ELOA (via the BC-box). Interacts (unneddylated form) with DCUN1D1, DCUN1D2, DCUN1D3, DCUN1D4 and DCUN1D5; these interactions promote the cullin neddylation. Neddylated; which enhances the ubiquitination activity of ECS complexes and prevents binding of the inhibitor CAND1. Deneddylated via its interaction with the COP9 signalosome (CSN).

It is found in the nucleus. Its pathway is protein modification; protein ubiquitination. Core component of multiple cullin-5-RING E3 ubiquitin-protein ligase complexes (ECS complexes, also named CRL5 complexes), which mediate the ubiquitination and subsequent proteasomal degradation of target proteins. Acts a scaffold protein that contributes to catalysis through positioning of the substrate and the ubiquitin-conjugating enzyme. The functional specificity of the E3 ubiquitin-protein ligase complex depends on the variable SOCS box-containing substrate recognition component. Acts as a key regulator of neuron positioning during cortex development: component of various SOCS-containing ECS complexes, such as the ECS(SOCS7) complex, that regulate reelin signaling by mediating ubiquitination and degradation of DAB1. ECS(SOCS1) seems to direct ubiquitination of JAK2. The ECS(SOCS2) complex mediates the ubiquitination and subsequent proteasomal degradation of phosphorylated EPOR and GHR. The ECS(SPSB3) complex catalyzes ubiquitination of nuclear CGAS. ECS(KLHDC1) complex is part of the DesCEND (destruction via C-end degrons) pathway and mediates ubiquitination and degradation of truncated SELENOS selenoprotein produced by failed UGA/Sec decoding, which ends with a glycine. The ECS(ASB9) complex mediates ubiquitination and degradation of CKB. As part of some ECS complex, promotes 'Lys-11'-linked ubiquitination and degradation of BTRC. As part of a multisubunit ECS complex, polyubiquitinates monoubiquitinated POLR2A. As part of the ECS(RAB40C) complex, mediates ANKRD28 ubiquitination and degradation, thereby regulating protein phosphatase 6 (PP6) complex activity and focal adhesion assembly during cell migration. As part of the ECS(RAB40A) complex, mediates RHOU 'Lys-48'-linked ubiquitination and degradation, thus inhibiting focal adhesion disassembly during cell migration. As part of the ECS(RAB40B) complex, mediates LIMA1/EPLIN and RAP2 ubiquitination, thereby regulating actin cytoskeleton dynamics and stress fiber formation during cell migration. May form a cell surface vasopressin receptor. The sequence is that of Cullin-5 from Pongo abelii (Sumatran orangutan).